Reading from the N-terminus, the 400-residue chain is Malonyl CoA-acyl carrier protein transacylase (400 aa).

Catalysis depends on residues Ser92 and His201.

The protein belongs to the FabD family.

It catalyses the reaction holo-[ACP] + malonyl-CoA = malonyl-[ACP] + CoA. Is involved in the mycosubtilin synthetase assembly, by catalyzing the transfer of malonyl groups to a specific acyl-carrier-protein domain on MycA. This Bacillus subtilis protein is Malonyl CoA-acyl carrier protein transacylase (fenF).